We begin with the raw amino-acid sequence, 806 residues long: Transitional endoplasmic reticulum ATPase (806 aa).

A2 carries the post-translational modification N-acetylalanine. 2 positions are modified to phosphoserine: S3 and S7. Residue K8 forms a Glycyl lysine isopeptide (Lys-Gly) (interchain with G-Cter in SUMO2) linkage. Position 13 is a phosphoserine (S13). K18 participates in a covalent cross-link: Glycyl lysine isopeptide (Lys-Gly) (interchain with G-Cter in SUMO2). S37 carries the post-translational modification Phosphoserine. 247–253 (PGTGKTL) is an ATP binding site. An N6,N6,N6-trimethyllysine; by VCPKMT modification is found at K315. N348 and H384 together coordinate ATP. T436 bears the Phosphothreonine mark. S462 is modified (phosphoserine). K502 and K505 each carry N6-acetyllysine. 521-526 (GCGKTL) is an ATP binding site. K668 is modified (N6-acetyllysine; alternate). K668 carries the post-translational modification N6-succinyllysine; alternate. Phosphoserine is present on S702. The disordered stretch occupies residues 708 to 727 (RRERERQTNPSAMEVEEDDP). K754 bears the N6-acetyllysine mark. The disordered stretch occupies residues 768-806 (FGSFRFPSGNQGGAGPSQGSGGGTGGNVYTEDNDDDLYG). 3 positions are modified to phosphoserine: S770, S775, and S787. A compositionally biased stretch (gly residues) spans 777-793 (NQGGAGPSQGSGGGTGG). An interaction with UBXN6 region spans residues 797–806 (TEDNDDDLYG). Residues 802–806 (DDLYG) carry the PIM motif motif. Residue Y805 is modified to Phosphotyrosine.

This sequence belongs to the AAA ATPase family. In terms of assembly, homohexamer. Forms a ring-shaped particle of 12.5 nm diameter, that displays 6-fold radial symmetry. Interacts with NSFL1C-like protein p37; the complex has membrane fusion activity and is required for Golgi and endoplasmic reticulum biogenesis. Interacts with RHBDD1 (via C-terminal domain). Interacts with SELENOS and SYVN1, as well as with DERL1 (via SHP-box motif), DERL2 and DERL3; which probably transfer misfolded proteins from the ER to VCP. Interacts with SVIP and DERL1. Component of a complex required to couple retrotranslocation, ubiquitination and deglycosylation composed of NGLY1, SAKS1, AMFR, VCP and RAD23B. Part of a complex composed of STUB1/CHIP, VCP/p97, CHRNA3, and UBXN2A that modulates the ubiquitination and endoplasmic reticulum-associated degradation (ERAD) of CHRNA3. Within the complex UBXN2A acts as a scaffold protein required for the interaction of CHRNA3 with VCP/p97, this interaction also inhibits CHRNA3 ubiquitination by STUB1/CHIP and subsequently ERAD. Interacts with UBXN2A (via UBX domain); the interaction is required for the interaction of CHRNA3 in the STUB1-VCP-UBXN2A complex. Directly interacts with UBXN4 and RNF19A. Interacts with CASR. Interacts with UBE4B and YOD1. Interacts with clathrin. Interacts with RNF103. Interacts with TRIM13 and TRIM21. Component of a VCP/p97-AMFR/gp78 complex that participates in the final step of the endoplasmic reticulum-associated degradation (ERAD) of HMGCR. Interacts directly with AMFR/gp78 (via its VIM). Interacts with SPRTN; leading to recruitment to stalled replication forks. Part of a ternary complex containing STX5A, NSFL1C and VCP. NSFL1C forms a homotrimer that binds to one end of a VCP homohexamer. The complex binds to membranes enriched in phosphatidylethanolamine-containing lipids and promotes Golgi membrane fusion. Binds to a heterodimer of NPLOC4 and UFD1, binding to this heterodimer inhibits Golgi-membrane fusion. Interaction with VCIP135 leads to dissociation of the complex via ATP hydrolysis by VCP. Part of a ternary complex containing NPLOC4, UFD1 and VCP. Interacts with WASHC5. Interacts with UBOX5. Interacts (via N-terminus) with UBXN7, UBXN8, and probably several other UBX domain-containing proteins (via UBX domains); the interactions are mutually exclusive with VIM-dependent interactions such as those with AMFR and SELENOS. Forms a complex with UBQLN1 and UBXN4. Interacts (via the PIM motif) with RNF31 (via the PUB domain). Interacts with RIGI and RNF125; interaction takes place when RIGI is ubiquitinated via 'Lys-63'-linked ubiquitin on its CARD domains, leading to recruit RNF125 and promote ubiquitination and degradation of RIGI. Interacts with BAG6. Interacts with UBXN10. Interacts with UBXN6; the interaction with UBXN6 is direct and competitive with UFD1. Forms a ternary complex with CAV1 and UBXN6. Interacts with PLAA, UBXN6 and YOD1; may form a complex involved in macroautophagy. Interacts with ANKZF1. Interacts with ubiquitin-binding protein FAF1. Interacts with ZFAND2B (via VIM motif); the interaction is direct. Interacts with ZFAND1 (via its ubiquitin-like region); this interaction occurs in an arsenite-dependent manner. Interacts with CCDC47. Interacts with LMBR1L and UBAC2. Interacts with ATXN3. Interacts with TEX264; bridging VCP to covalent DNA-protein cross-links (DPCs). Phosphorylated by tyrosine kinases in response to T-cell antigen receptor activation. Phosphorylated in mitotic cells. In terms of processing, ISGylated. Post-translationally, methylation at Lys-315 catalyzed by VCPKMT is increased in the presence of ASPSCR1. Lys-315 methylation may decrease ATPase activity.

Its subcellular location is the cytoplasm. The protein resides in the cytosol. It localises to the endoplasmic reticulum. The protein localises to the nucleus. It is found in the stress granule. The catalysed reaction is ATP + H2O = ADP + phosphate + H(+). Necessary for the fragmentation of Golgi stacks during mitosis and for their reassembly after mitosis. Involved in the formation of the transitional endoplasmic reticulum (tER). The transfer of membranes from the endoplasmic reticulum to the Golgi apparatus occurs via 50-70 nm transition vesicles which derive from part-rough, part-smooth transitional elements of the endoplasmic reticulum (tER). Vesicle budding from the tER is an ATP-dependent process. The ternary complex containing UFD1, VCP and NPLOC4 binds ubiquitinated proteins and is necessary for the export of misfolded proteins from the ER to the cytoplasm, where they are degraded by the proteasome. The NPLOC4-UFD1-VCP complex regulates spindle disassembly at the end of mitosis and is necessary for the formation of a closed nuclear envelope. Regulates E3 ubiquitin-protein ligase activity of RNF19A. Component of the VCP/p97-AMFR/gp78 complex that participates in the final step of the sterol-mediated ubiquitination and endoplasmic reticulum-associated degradation (ERAD) of HMGCR. Mediates the endoplasmic reticulum-associated degradation of CHRNA3 in cortical neurons as part of the STUB1-VCP-UBXN2A complex. Involved in endoplasmic reticulum stress-induced pre-emptive quality control, a mechanism that selectively attenuates the translocation of newly synthesized proteins into the endoplasmic reticulum and reroutes them to the cytosol for proteasomal degradation. Involved in clearance process by mediating G3BP1 extraction from stress granules. Also involved in DNA damage response: recruited to double-strand breaks (DSBs) sites in a RNF8- and RNF168-dependent manner and promotes the recruitment of TP53BP1 at DNA damage sites. Recruited to stalled replication forks by SPRTN: may act by mediating extraction of DNA polymerase eta (POLH) to prevent excessive translesion DNA synthesis and limit the incidence of mutations induced by DNA damage. Together with SPRTN metalloprotease, involved in the repair of covalent DNA-protein cross-links (DPCs) during DNA synthesis. Involved in interstrand cross-link repair in response to replication stress by mediating unloading of the ubiquitinated CMG helicase complex. Mediates extraction of PARP1 trapped to chromatin: recognizes and binds ubiquitinated PARP1 and promotes its removal. Required for cytoplasmic retrotranslocation of stressed/damaged mitochondrial outer-membrane proteins and their subsequent proteasomal degradation. Essential for the maturation of ubiquitin-containing autophagosomes and the clearance of ubiquitinated protein by autophagy. Acts as a negative regulator of type I interferon production by interacting with RIGI: interaction takes place when RIGI is ubiquitinated via 'Lys-63'-linked ubiquitin on its CARD domains, leading to recruit RNF125 and promote ubiquitination and degradation of RIGI. May play a role in the ubiquitin-dependent sorting of membrane proteins to lysosomes where they undergo degradation. May more particularly play a role in caveolins sorting in cells. By controlling the steady-state expression of the IGF1R receptor, indirectly regulates the insulin-like growth factor receptor signaling pathway. In Rattus norvegicus (Rat), this protein is Transitional endoplasmic reticulum ATPase (Vcp).